Here is a 278-residue protein sequence, read N- to C-terminus: Deoxyuridine 5'-triphosphate nucleotidohydrolase (278 aa).

Substrate contacts are provided by residues 171 to 173 (RSG) and 273 to 274 (FG).

The protein belongs to the dUTPase family. The cofactor is Mg(2+).

The enzyme catalyses dUTP + H2O = dUMP + diphosphate + H(+). In terms of biological role, involved in nucleotide metabolism: produces dUMP, the immediate precursor of thymidine nucleotides and decreases the intracellular concentration of dUTP to avoid uracil incorporation into viral DNA. The polypeptide is Deoxyuridine 5'-triphosphate nucleotidohydrolase (Homo sapiens (Human)).